Reading from the N-terminus, the 232-residue chain is Orotidine 5'-phosphate decarboxylase (232 aa).

Substrate-binding positions include aspartate 11, lysine 33, 61–70 (DMKLFDIGAT), threonine 116, arginine 179, glutamine 188, glycine 208, and arginine 209. Residue lysine 63 is the Proton donor of the active site.

Belongs to the OMP decarboxylase family. Type 1 subfamily. Homodimer.

The catalysed reaction is orotidine 5'-phosphate + H(+) = UMP + CO2. It functions in the pathway pyrimidine metabolism; UMP biosynthesis via de novo pathway; UMP from orotate: step 2/2. In terms of biological role, catalyzes the decarboxylation of orotidine 5'-monophosphate (OMP) to uridine 5'-monophosphate (UMP). The chain is Orotidine 5'-phosphate decarboxylase from Cereibacter sphaeroides (strain ATCC 17023 / DSM 158 / JCM 6121 / CCUG 31486 / LMG 2827 / NBRC 12203 / NCIMB 8253 / ATH 2.4.1.) (Rhodobacter sphaeroides).